Reading from the N-terminus, the 309-residue chain is HPr kinase/phosphorylase (309 aa).

Active-site residues include H138 and K159. 153-160 is a binding site for ATP; that stretch reads GQSGVGKS. S160 contacts Mg(2+). D177 acts as the Proton acceptor; for phosphorylation activity. Proton donor; for dephosphorylation activity in catalysis. The tract at residues 201-210 is important for the catalytic mechanism of both phosphorylation and dephosphorylation; that stretch reads LEIRGLGIIN. Residue E202 participates in Mg(2+) binding. Residue R243 is part of the active site. The important for the catalytic mechanism of dephosphorylation stretch occupies residues 264–269; it reads PVRPGR.

Belongs to the HPrK/P family. As to quaternary structure, homohexamer. Requires Mg(2+) as cofactor.

It carries out the reaction [HPr protein]-L-serine + ATP = [HPr protein]-O-phospho-L-serine + ADP + H(+). The enzyme catalyses [HPr protein]-O-phospho-L-serine + phosphate + H(+) = [HPr protein]-L-serine + diphosphate. Catalyzes the ATP- as well as the pyrophosphate-dependent phosphorylation of a specific serine residue in HPr, a phosphocarrier protein of the phosphoenolpyruvate-dependent sugar phosphotransferase system (PTS). HprK/P also catalyzes the pyrophosphate-producing, inorganic phosphate-dependent dephosphorylation (phosphorolysis) of seryl-phosphorylated HPr (P-Ser-HPr). The two antagonistic activities of HprK/P are regulated by several intracellular metabolites, which change their concentration in response to the absence or presence of rapidly metabolisable carbon sources (glucose, fructose, etc.) in the growth medium. Also phosphorylates/dephosphorylates the HPr-like catabolite repression protein crh on a specific serine residue. Therefore, by controlling the phosphorylation state of HPr and crh, HPrK/P is a sensor enzyme that plays a major role in the regulation of carbon metabolism and sugar transport: it mediates carbon catabolite repression (CCR), and regulates PTS-catalyzed carbohydrate uptake and inducer exclusion. This chain is HPr kinase/phosphorylase, found in Bacillus cereus (strain G9842).